The chain runs to 372 residues: Ciliary neurotrophic factor receptor subunit alpha (372 aa).

The signal sequence occupies residues 1–22 (MAAPVPWACCAVLAAAAAVVYA). The 78-residue stretch at 27-104 (PQEAPHVQYE…WHLRHQVLLH (78 aa)) folds into the Ig-like C2-type domain. The cysteines at positions 46 and 89 are disulfide-linked. N-linked (GlcNAc...) asparagine glycans are attached at residues Asn60, Asn70, Asn142, and Asn190. Fibronectin type-III domains are found at residues 108 to 205 (PPRE…VKPD) and 206 to 306 (PPEN…TEEP). The WSXWS motif signature appears at 290-294 (WSDWS). A disordered region spans residues 301 to 340 (PWTEEPRHLTTEAQAPETTTSTTSSLAPPPTTKICDPGEL). Residues 311–326 (TEAQAPETTTSTTSSL) are compositionally biased toward low complexity. Residue Ser342 is the site of GPI-anchor amidated serine attachment. The propeptide at 343 to 372 (GGGPSAPFLIHVPVTLALAAAAATANSLLI) is removed in mature form.

The protein belongs to the type I cytokine receptor family. Type 3 subfamily. As to quaternary structure, forms a heterotrimer with LIFR and IL6ST. Interacts with heterodimeric neurotropic cytokine composed of CLCF1/CLC and CRLF1/CLF-1. Either alone or in complex with the heterodimer CLCF1-CRLF1 interacts with SORL1; this interaction may promote internalization and lysosomal degradation. As to expression, expressed in retina, brain, spleen, lung, liver and kidney. In the retina it is highly expressed by photoreceptors, but also found in the RPE, inner nuclear layer and ganglion cells.

The protein localises to the cell membrane. Binds to CNTF. The alpha subunit provides the receptor specificity. This is Ciliary neurotrophic factor receptor subunit alpha (CNTFR) from Canis lupus familiaris (Dog).